The chain runs to 353 residues: Peptide methionine sulfoxide reductase MsrA/MsrB (353 aa).

A peptide methionine sulfoxide reductase A region spans residues 43-196 (REIYLAGGCF…PNGYCHIDIT (154 aa)). Cysteine 51 is an active-site residue. One can recognise a MsrB domain in the interval 213–336 (DAELKAKLTP…NSASIKFIPL (124 aa)). Cysteine 325 (nucleophile) is an active-site residue.

The protein in the N-terminal section; belongs to the MsrA Met sulfoxide reductase family. This sequence in the C-terminal section; belongs to the MsrB Met sulfoxide reductase family.

The catalysed reaction is L-methionyl-[protein] + [thioredoxin]-disulfide + H2O = L-methionyl-(S)-S-oxide-[protein] + [thioredoxin]-dithiol. It carries out the reaction [thioredoxin]-disulfide + L-methionine + H2O = L-methionine (S)-S-oxide + [thioredoxin]-dithiol. The enzyme catalyses L-methionyl-[protein] + [thioredoxin]-disulfide + H2O = L-methionyl-(R)-S-oxide-[protein] + [thioredoxin]-dithiol. In terms of biological role, has an important function as a repair enzyme for proteins that have been inactivated by oxidation. Catalyzes the reversible oxidation-reduction of methionine sulfoxide in proteins to methionine. The chain is Peptide methionine sulfoxide reductase MsrA/MsrB (msrAB) from Haemophilus influenzae (strain ATCC 51907 / DSM 11121 / KW20 / Rd).